The following is a 434-amino-acid chain: MAKTDIARRVYNHAWKLDPIVRSLLDTDFYKLLMLQMIWGLYPKVDATFSLINRTTSVRLADEIDEGELRAQLDHARTLRFSKKEMIWLAGNSFYGRKQIFQPEFLNWLHDFQLPEYDLRRKDGQYELHFHGPWSHTTMWEIPALAIINELRSRAAMKNLGPFSLDVLYARAKAKMWSKVERLRQLPGLKISDFGTRRRHSFLWQRWCVEALKEGIGDAFTGTSNVLLAMDTDLEALGTNAHELPMVLAALAKNDEELRSAPYRVLQDWNRYYGGNLLIVLPDAFGTAAFLRNAPDWVADWTGFRPDSAPPIEGGERIIEWWKSRGKDPREKLLIFSDALDVDTIEETYRHFEGRVRMSFGWGTNLTNDFAGCAPKEIEGLNAISLVCKVTDANGHPAVKLSDNPQKATGDPKEVARYLKFFGNEERVEQLVRV.

His242 bears the Phosphohistidine; by autocatalysis mark.

This sequence belongs to the NAPRTase family. Post-translationally, transiently phosphorylated on a His residue during the reaction cycle. Phosphorylation strongly increases the affinity for substrates and increases the rate of nicotinate D-ribonucleotide production. Dephosphorylation regenerates the low-affinity form of the enzyme, leading to product release.

It catalyses the reaction nicotinate + 5-phospho-alpha-D-ribose 1-diphosphate + ATP + H2O = nicotinate beta-D-ribonucleotide + ADP + phosphate + diphosphate. It participates in cofactor biosynthesis; NAD(+) biosynthesis; nicotinate D-ribonucleotide from nicotinate: step 1/1. Its function is as follows. Catalyzes the synthesis of beta-nicotinate D-ribonucleotide from nicotinate and 5-phospho-D-ribose 1-phosphate at the expense of ATP. The protein is Nicotinate phosphoribosyltransferase of Brucella anthropi (strain ATCC 49188 / DSM 6882 / CCUG 24695 / JCM 21032 / LMG 3331 / NBRC 15819 / NCTC 12168 / Alc 37) (Ochrobactrum anthropi).